The primary structure comprises 163 residues: Epithelial membrane protein 3 (163 aa).

A helical transmembrane segment spans residues 4–24 (LLLVVSALHILILILLFVATL). N-linked (GlcNAc...) asparagine glycosylation is found at Asn-49 and Asn-56. A run of 3 helical transmembrane segments spans residues 66-86 (VQVL…LFMF), 100-120 (TGFC…IYAI), and 139-159 (FALA…YIHL).

Belongs to the PMP-22/EMP/MP20 family.

The protein resides in the membrane. Its function is as follows. Probably involved in cell proliferation and cell-cell interactions. The sequence is that of Epithelial membrane protein 3 (EMP3) from Bos taurus (Bovine).